The sequence spans 104 residues: uncharacterized protein (104 aa).

This is an uncharacterized protein from Saccharomyces cerevisiae (strain ATCC 204508 / S288c) (Baker's yeast).